Reading from the N-terminus, the 325-residue chain is MTRWWAAVSDLSLRRRLRPALGLLPPGSGLLVAVSGGQDSLCLLKLLVDLAPERGLHLHVGHLDHRWRPGSERDAQRVAVLCNVWGVPFHLEIARTPPASEAAARAWRYCWLEQIARGLALERVVTGHTLSDRAETVLFNLLRGSGGAGLGSLDWERPLGGGVRLVRPLLGITRAETGAYCLAHHLPICIDESNANLTFRRNRIRLELMPYLREHFNPLVEQTLARTGDILHAESELLESLLDEHWHSLVQEGRLHRNTLAALPLALQRRAVRRWLSVGLGRQPNFEHIAAVLGCLSAPNRTRTSPLAHSLLVEVQGEWLGLVGG.

An ATP-binding site is contributed by serine 35–serine 40.

Belongs to the tRNA(Ile)-lysidine synthase family.

The protein localises to the cytoplasm. It catalyses the reaction cytidine(34) in tRNA(Ile2) + L-lysine + ATP = lysidine(34) in tRNA(Ile2) + AMP + diphosphate + H(+). In terms of biological role, ligates lysine onto the cytidine present at position 34 of the AUA codon-specific tRNA(Ile) that contains the anticodon CAU, in an ATP-dependent manner. Cytidine is converted to lysidine, thus changing the amino acid specificity of the tRNA from methionine to isoleucine. The protein is tRNA(Ile)-lysidine synthase of Gloeobacter violaceus (strain ATCC 29082 / PCC 7421).